The sequence spans 482 residues: Bifunctional protein GlmU (482 aa).

Positions 1–238 are pyrophosphorylase; sequence MSAIRPAAVV…HREIAGINNR (238 aa). Residues 12–15, K26, Q79, and 84–85 contribute to the UDP-N-acetyl-alpha-D-glucosamine site; these read LAAG and GT. A Mg(2+)-binding site is contributed by D110. Positions 147, 163, 178, and 236 each coordinate UDP-N-acetyl-alpha-D-glucosamine. N236 is a binding site for Mg(2+). The segment at 239 to 259 is linker; sequence VQLAEARRILNDRLLTGAMLA. Residues 260–482 form an N-acetyltransferase region; that stretch reads GVTVVDPATT…AVSREADGED (223 aa). Residues R341 and K359 each contribute to the UDP-N-acetyl-alpha-D-glucosamine site. H371 acts as the Proton acceptor in catalysis. UDP-N-acetyl-alpha-D-glucosamine-binding residues include Y374 and N385. Residues A388, 394–395, S413, A431, and R448 contribute to the acetyl-CoA site; that span reads NY. The tract at residues 460–482 is disordered; the sequence is RKRPGSAAAKAAEAVSREADGED. The segment covering 464–473 has biased composition (low complexity); that stretch reads GSAAAKAAEA.

The protein in the N-terminal section; belongs to the N-acetylglucosamine-1-phosphate uridyltransferase family. It in the C-terminal section; belongs to the transferase hexapeptide repeat family. As to quaternary structure, homotrimer. Mg(2+) is required as a cofactor.

It is found in the cytoplasm. It carries out the reaction alpha-D-glucosamine 1-phosphate + acetyl-CoA = N-acetyl-alpha-D-glucosamine 1-phosphate + CoA + H(+). The catalysed reaction is N-acetyl-alpha-D-glucosamine 1-phosphate + UTP + H(+) = UDP-N-acetyl-alpha-D-glucosamine + diphosphate. It functions in the pathway nucleotide-sugar biosynthesis; UDP-N-acetyl-alpha-D-glucosamine biosynthesis; N-acetyl-alpha-D-glucosamine 1-phosphate from alpha-D-glucosamine 6-phosphate (route II): step 2/2. Its pathway is nucleotide-sugar biosynthesis; UDP-N-acetyl-alpha-D-glucosamine biosynthesis; UDP-N-acetyl-alpha-D-glucosamine from N-acetyl-alpha-D-glucosamine 1-phosphate: step 1/1. The protein operates within bacterial outer membrane biogenesis; LPS lipid A biosynthesis. Functionally, catalyzes the last two sequential reactions in the de novo biosynthetic pathway for UDP-N-acetylglucosamine (UDP-GlcNAc). The C-terminal domain catalyzes the transfer of acetyl group from acetyl coenzyme A to glucosamine-1-phosphate (GlcN-1-P) to produce N-acetylglucosamine-1-phosphate (GlcNAc-1-P), which is converted into UDP-GlcNAc by the transfer of uridine 5-monophosphate (from uridine 5-triphosphate), a reaction catalyzed by the N-terminal domain. This Streptomyces coelicolor (strain ATCC BAA-471 / A3(2) / M145) protein is Bifunctional protein GlmU.